The sequence spans 277 residues: NH(3)-dependent NAD(+) synthetase (277 aa).

Residue 36–43 (GLSGGIDS) coordinates ATP. Residue Asp42 participates in Mg(2+) binding. A deamido-NAD(+)-binding site is contributed by Arg118. Thr138 serves as a coordination point for ATP. Glu143 contacts Mg(2+). ATP contacts are provided by Lys167 and Ser189.

This sequence belongs to the NAD synthetase family. Homodimer.

The enzyme catalyses deamido-NAD(+) + NH4(+) + ATP = AMP + diphosphate + NAD(+) + H(+). The protein operates within cofactor biosynthesis; NAD(+) biosynthesis; NAD(+) from deamido-NAD(+) (ammonia route): step 1/1. Catalyzes the ATP-dependent amidation of deamido-NAD to form NAD. Uses ammonia as a nitrogen source. This chain is NH(3)-dependent NAD(+) synthetase, found in Pelodictyon phaeoclathratiforme (strain DSM 5477 / BU-1).